The sequence spans 199 residues: Peroxisomal membrane protein PEX17 (199 aa).

The protein resides in the peroxisome membrane. Its function is as follows. Component of the peroxisomal translocation machinery with PEX13 and PEX14. Interacts indirectly with the PTS1 receptor (PAS10/PEX5) and directly binds to PEX14. Required for import of both PTS1 and PTS2 proteins. This Saccharomyces cerevisiae (strain ATCC 204508 / S288c) (Baker's yeast) protein is Peroxisomal membrane protein PEX17 (PEX17).